Here is a 366-residue protein sequence, read N- to C-terminus: MALTAGIVGLPNVGKSTLFNAITQAGAESANYPFCTIDPNVGIVEVPDDRLQKLTELVNPKKTVPTAFEFTDIAGIVKGASKGEGLGNKFLSHIRQVDAICHVVRAFSDDNITHVSGKVDPIDDIETINLELILADMETVEKRITRVSKLAKQKDKDAVFEFEILSKLKEAFESEKPARSVEFTEEQQKLVKQLHLLTSKPILYVANVSEDEVADPSGNENVAKIREYAAGENAEVIVVCAKIESEIAELEGEEKQMFLEELGIQESGLDQLIKASYSLLGLATYFTAGEQEVRAWTFKKGMKAPECAGIIHSDFERGFIRAETVAYEDLLAGGGMAGAKEAGKVRLEGKEYVVQDGDVIHFRFNV.

The OBG-type G domain occupies 3-259; the sequence is LTAGIVGLPN…LEGEEKQMFL (257 aa). An ATP-binding site is contributed by 12 to 17; that stretch reads NVGKST. Mg(2+) is bound by residues Ser16 and Thr36. A TGS domain is found at 281-364; that stretch reads GLATYFTAGE…QDGDVIHFRF (84 aa).

Belongs to the TRAFAC class OBG-HflX-like GTPase superfamily. OBG GTPase family. YchF/OLA1 subfamily. Requires Mg(2+) as cofactor.

In terms of biological role, ATPase that binds to both the 70S ribosome and the 50S ribosomal subunit in a nucleotide-independent manner. The polypeptide is Ribosome-binding ATPase YchF (Bacillus subtilis (strain 168)).